A 294-amino-acid polypeptide reads, in one-letter code: Probable enoyl-CoA hydratase echA12 (294 aa).

It belongs to the enoyl-CoA hydratase/isomerase family.

The catalysed reaction is a (3S)-3-hydroxyacyl-CoA = a (2E)-enoyl-CoA + H2O. It carries out the reaction a 4-saturated-(3S)-3-hydroxyacyl-CoA = a (3E)-enoyl-CoA + H2O. Could possibly oxidize fatty acids using specific components. This chain is Probable enoyl-CoA hydratase echA12 (echA12), found in Mycobacterium leprae (strain TN).